A 415-amino-acid polypeptide reads, in one-letter code: Glucose-1-phosphate adenylyltransferase (415 aa).

Alpha-D-glucose 1-phosphate-binding positions include Tyr98, Gly163, 178-179 (EK), and Ser189.

This sequence belongs to the bacterial/plant glucose-1-phosphate adenylyltransferase family. In terms of assembly, homotetramer.

It carries out the reaction alpha-D-glucose 1-phosphate + ATP + H(+) = ADP-alpha-D-glucose + diphosphate. The protein operates within glycan biosynthesis; glycogen biosynthesis. Involved in the biosynthesis of ADP-glucose, a building block required for the elongation reactions to produce glycogen. Catalyzes the reaction between ATP and alpha-D-glucose 1-phosphate (G1P) to produce pyrophosphate and ADP-Glc. This Fervidobacterium nodosum (strain ATCC 35602 / DSM 5306 / Rt17-B1) protein is Glucose-1-phosphate adenylyltransferase.